A 117-amino-acid chain; its full sequence is Conotoxin vil14.2 (117 aa).

The N-terminal stretch at 1-22 (MGFRVLVLVVMATTFALPFTFF) is a signal peptide. A propeptide spanning residues 23–90 (EEPGRSPFRP…FAELSVGQRR (68 aa)) is cleaved from the precursor. Positions 53–77 (RADGQPPDMRQPEMRRPEMRRPEVR) are disordered. A compositionally biased stretch (basic and acidic residues) spans 62–77 (RQPEMRRPEMRRPEVR). Disulfide bonds link cysteine 96–cysteine 116 and cysteine 100–cysteine 112.

This sequence belongs to the conotoxin R superfamily. As to expression, expressed by the venom duct.

The protein localises to the secreted. The chain is Conotoxin vil14.2 from Conus villepinii (Villepin's cone).